The sequence spans 462 residues: MAPAQNQITSKHVAVIGAGPAGLITSRELRREGHSVVVFEREKQVGGLWVYTPKSDSDPLSLDPTRSKVHSSIYESLRTNVPRESMGVRDFPFLPRFDDESRDARRYPNHREVLAYIQDFAREFKIEEMIRFETEVVRVEPVDNGNWRVQSKNSGGFLEDEIYDAVVVCNGHYTEPNIAHIPGIKSWPGKQIHSHNYRVPDPFENEVVVVIGNFASGADISRDIAKVAKEVHIASRAREPHTYEKISVPQNNLWMHSEIDTTHEDGSIVFKNGKVIFADSIVYCTGYKYNFPFLETNGYLRIDEKRVEPLYKHVFPPALAPGLAFVGLPAMGIVFVMFEIQSKWVAAVLSGRVTLPSTDKMMEDINAWYASLDALGIPKRHTHTIGRIQSEYLNWVAKESGCELVERWRGQEVDGGYLRLVAHPETYRDEWDDDELIEEAYNDFSRKKLISVDPSYYLENGR.

17-22 lines the FAD pocket; it reads GAGPAG. 212–217 contacts NADP(+); it reads GNFASG. A helical membrane pass occupies residues 318 to 338; that stretch reads ALAPGLAFVGLPAMGIVFVMF.

This sequence belongs to the FMO family.

Its subcellular location is the membrane. The enzyme catalyses a (Z)-omega-(methylsulfanyl)-N-sulfo-alkylhydroximate S-glucoside + NADPH + O2 + H(+) = a (Z)-omega-(methylsulfinyl)-alkyl-glucosinolate + NADP(+) + H2O. Its function is as follows. Catalyzes the conversion of methylthioalkyl glucosinolates of any chain length into methylsulfinylalkyl glucosinolates. Prefers probably short-chain methylthioalkyl glucosinolates in cv. Landsberg erecta. This is Flavin-containing monooxygenase FMO GS-OX3 (FMOGS-OX3) from Arabidopsis thaliana (Mouse-ear cress).